The primary structure comprises 171 residues: MICITGTPGVGKTTLAGILRERGLEVISLGELIRQKGFVLGRDPIRGYLEADIEAACSHLQEMEGLDVVEGHLSHLCRSCSMVIVLRLHPEVLRGRLEGRGYPEGKVLENLEAEALDVCTVEAFEIHGERVHEVDTTGRSPHEVADIITDIMNGSRVCPPGGVDFSGWLLG.

Positions 9, 11, 12, 13, and 14 each coordinate ATP. The segment at 28-51 (SLGELIRQKGFVLGRDPIRGYLEA) is NMP. An LID region spans residues 99–109 (GRGYPEGKVLE). Arginine 100 provides a ligand contact to ATP.

This sequence belongs to the adenylate kinase family. AK6 subfamily. Interacts with uS11. Not a structural component of 40S pre-ribosomes, but transiently interacts with them by binding to uS11.

It catalyses the reaction AMP + ATP = 2 ADP. The enzyme catalyses ATP + H2O = ADP + phosphate + H(+). In terms of biological role, broad-specificity nucleoside monophosphate (NMP) kinase that catalyzes the reversible transfer of the terminal phosphate group between nucleoside triphosphates and monophosphates. Also has ATPase activity. Involved in the late maturation steps of the 30S ribosomal particles, specifically 16S rRNA maturation. While NMP activity is not required for ribosome maturation, ATPase activity is. Associates transiently with small ribosomal subunit protein uS11. ATP hydrolysis breaks the interaction with uS11. May temporarily remove uS11 from the ribosome to enable a conformational change of the ribosomal RNA that is needed for the final maturation step of the small ribosomal subunit. In Methanothermobacter thermautotrophicus (strain ATCC 29096 / DSM 1053 / JCM 10044 / NBRC 100330 / Delta H) (Methanobacterium thermoautotrophicum), this protein is Putative adenylate kinase.